The following is a 637-amino-acid chain: tRNA uridine 5-carboxymethylaminomethyl modification enzyme MnmG (637 aa).

14–19 (GAGHAG) contacts FAD. 279 to 293 (GPRYCPSIEDKVVRF) serves as a coordination point for NAD(+).

This sequence belongs to the MnmG family. In terms of assembly, homodimer. Heterotetramer of two MnmE and two MnmG subunits. Requires FAD as cofactor.

The protein localises to the cytoplasm. In terms of biological role, NAD-binding protein involved in the addition of a carboxymethylaminomethyl (cmnm) group at the wobble position (U34) of certain tRNAs, forming tRNA-cmnm(5)s(2)U34. The polypeptide is tRNA uridine 5-carboxymethylaminomethyl modification enzyme MnmG (Desulfitobacterium hafniense (strain DSM 10664 / DCB-2)).